A 387-amino-acid chain; its full sequence is Transmembrane protein 120 homolog (387 aa).

The stretch at 1–39 forms a coiled coil; that stretch reads MNIDSLKNEWEELNKEFAELESCNRRYIELLEQLHSHQQ. A glycan (N-linked (GlcNAc...) asparagine) is linked at N111. 6 helical membrane-spanning segments follow: residues 130–150, 155–175, 191–211, 216–238, 264–284, and 302–322; these read FKLI…IFNY, LAFI…ESIL, FIST…HWQI, FMYF…KGLL, GLSF…YNAW, and VMSG…LWVV. The disordered stretch occupies residues 346–387; the sequence is RKEMKNSASDLDLSSGSKLSPTATTTTSIATATQTPAEKKET. Phosphoserine occurs at positions 352, 354, and 365. Residues 352-381 show a composition bias toward low complexity; that stretch reads SASDLDLSSGSKLSPTATTTTSIATATQTP.

The protein belongs to the TMEM120 family.

The protein localises to the membrane. This chain is Transmembrane protein 120 homolog, found in Drosophila melanogaster (Fruit fly).